The following is a 166-amino-acid chain: MKYTSYILAFQLCIVLGSLGCYCQDPYVKEAENLKKYFNAGDSDVADNGTLFLNILRTWREEGDRKIMQSQIISFYFKLFKNFKDNQSIQKSMETIKEDMNVKFFNSNKRKQDDFERLTNYSVTDLNVQRKAIHELIQVMAELSPAPKIGKRKRSQTLFRGRRASQ.

Residues 1 to 23 (MKYTSYILAFQLCIVLGSLGCYC) form the signal peptide. Q24 is modified (pyrrolidone carboxylic acid). N-linked (GlcNAc...) asparagine glycosylation is found at N48, N86, and N120.

Belongs to the type II (or gamma) interferon family. In terms of assembly, homodimer. Interacts with IFNGR1 (via extracellular domain); this interaction promotes IFNGR1 dimerization. Released primarily from activated T lymphocytes.

The protein localises to the secreted. Functionally, type II interferon produced by immune cells such as T-cells and NK cells that plays crucial roles in antimicrobial, antiviral, and antitumor responses by activating effector immune cells and enhancing antigen presentation. Primarily signals through the JAK-STAT pathway after interaction with its receptor IFNGR1 to affect gene regulation. Upon IFNG binding, IFNGR1 intracellular domain opens out to allow association of downstream signaling components JAK2, JAK1 and STAT1, leading to STAT1 activation, nuclear translocation and transcription of IFNG-regulated genes. Many of the induced genes are transcription factors such as IRF1 that are able to further drive regulation of a next wave of transcription. Plays a role in class I antigen presentation pathway by inducing a replacement of catalytic proteasome subunits with immunoproteasome subunits. In turn, increases the quantity, quality, and repertoire of peptides for class I MHC loading. Increases the efficiency of peptide generation also by inducing the expression of activator PA28 that associates with the proteasome and alters its proteolytic cleavage preference. Up-regulates as well MHC II complexes on the cell surface by promoting expression of several key molecules such as cathepsins B/CTSB, H/CTSH, and L/CTSL. Participates in the regulation of hematopoietic stem cells during development and under homeostatic conditions by affecting their development, quiescence, and differentiation. The polypeptide is Interferon gamma (IFNG) (Saimiri sciureus (Common squirrel monkey)).